Here is a 217-residue protein sequence, read N- to C-terminus: Octanoyltransferase (217 aa).

The 176-residue stretch at Ser32 to His207 folds into the BPL/LPL catalytic domain. Residues Arg71–His78, Ser138–Gly140, and Gly151–Ala153 contribute to the substrate site. Cys169 functions as the Acyl-thioester intermediate in the catalytic mechanism.

Belongs to the LipB family.

The protein resides in the cytoplasm. The enzyme catalyses octanoyl-[ACP] + L-lysyl-[protein] = N(6)-octanoyl-L-lysyl-[protein] + holo-[ACP] + H(+). Its pathway is protein modification; protein lipoylation via endogenous pathway; protein N(6)-(lipoyl)lysine from octanoyl-[acyl-carrier-protein]: step 1/2. Catalyzes the transfer of endogenously produced octanoic acid from octanoyl-acyl-carrier-protein onto the lipoyl domains of lipoate-dependent enzymes. Lipoyl-ACP can also act as a substrate although octanoyl-ACP is likely to be the physiological substrate. This chain is Octanoyltransferase, found in Shewanella sp. (strain W3-18-1).